The primary structure comprises 554 residues: Gamma-aminobutyric acid receptor subunit alpha-4 (554 aa).

Residues Met1 to Gly35 form the signal peptide. Over Gln36–Phe259 the chain is Extracellular. A glycan (N-linked (GlcNAc...) asparagine) is linked at Asn47. Arg100 serves as a coordination point for 4-aminobutanoate. N-linked (GlcNAc...) asparagine glycosylation is found at Asn144 and Asn157. Residue Thr163 coordinates 4-aminobutanoate. Cys172 and Cys186 are joined by a disulfide. Residues Met260–Ile280 traverse the membrane as a helical segment. At Asn281–Ser284 the chain is on the cytoplasmic side. The chain crosses the membrane as a helical span at residues Val285–Ser305. Topologically, residues Ala306 to Ala318 are extracellular. The helical transmembrane segment at Met319 to Asn341 threads the bilayer. The Cytoplasmic segment spans residues Tyr342–Lys517. Disordered regions lie at residues Lys350–Asn381, Glu397–Pro435, Pro452–Gly471, and Ala495–Thr515. Over residues Ser410–Lys422 the composition is skewed to low complexity. The segment covering Thr502–Ser511 has biased composition (pro residues). The helical transmembrane segment at Ile518–Val540 threads the bilayer. Residues Tyr541 to Met554 lie on the Extracellular side of the membrane.

This sequence belongs to the ligand-gated ion channel (TC 1.A.9) family. Gamma-aminobutyric acid receptor (TC 1.A.9.5) subfamily. GABRA4 sub-subfamily. As to quaternary structure, heteropentamer, formed by a combination of alpha (GABRA1-6), beta (GABRB1-3), gamma (GABRG1-3), delta (GABRD), epsilon (GABRE), rho (GABRR1-3), pi (GABRP) and theta (GABRQ) chains, each subunit exhibiting distinct physiological and pharmacological properties. In terms of tissue distribution, expressed in the brain.

It localises to the cell membrane. Its subcellular location is the postsynaptic cell membrane. The enzyme catalyses chloride(in) = chloride(out). With respect to regulation, potentiated by histamine. Its function is as follows. Alpha subunit of the heteropentameric ligand-gated chloride channel gated by gamma-aminobutyric acid (GABA), a major inhibitory neurotransmitter in the brain. GABA-gated chloride channels, also named GABA(A) receptors (GABAAR), consist of five subunits arranged around a central pore and contain GABA active binding site(s) located at the alpha and beta subunit interface(s). When activated by GABA, GABAARs selectively allow the flow of chloride anions across the cell membrane down their electrochemical gradient. GABAARs containing alpha-4 are predominantly extrasynaptic, contributing to tonic inhibition in dentate granule cells and thalamic relay neurons. Extrasynaptic alpha-4-containing GABAARs control levels of excitability and network activity. GABAAR containing alpha-4-beta-3-delta subunits can simultaneously bind GABA and histamine where histamine binds at the interface of two neighboring beta subunits, which may be involved in the regulation of sleep and wakefulness. In Homo sapiens (Human), this protein is Gamma-aminobutyric acid receptor subunit alpha-4.